The primary structure comprises 586 residues: Exocyst complex component EXO70A3 (586 aa).

N-linked (GlcNAc...) asparagine glycans are attached at residues N65 and N106. Residues C119–D149 are disordered. A helical membrane pass occupies residues F258–I278. N321 and N487 each carry an N-linked (GlcNAc...) asparagine glycan.

The protein belongs to the EXO70 family. In terms of assembly, subunit of the exocyst complex. As to expression, confined to the outer layer of the columella cells in the root tips of young seedlings.

The protein resides in the membrane. Component of the exocyst complex involved in the docking of exocytic vesicles with fusion sites on the plasma membrane during regulated or polarized secretion. Involved in PIN4 exocytosis and gravitropic responses in columella cells. By monitoring PIN4 distribution in columella cells, modulates auxin repartition and subsequently regulates the root system architecture (RSA), thus being a component of the auxin-dependent root directional growth (ARD). The protein is Exocyst complex component EXO70A3 of Arabidopsis thaliana (Mouse-ear cress).